Here is a 151-residue protein sequence, read N- to C-terminus: Ribosomal RNA large subunit methyltransferase H (151 aa).

S-adenosyl-L-methionine-binding positions include G100 and 119-124 (LSKMTF).

This sequence belongs to the RNA methyltransferase RlmH family. Homodimer.

It localises to the cytoplasm. The catalysed reaction is pseudouridine(1915) in 23S rRNA + S-adenosyl-L-methionine = N(3)-methylpseudouridine(1915) in 23S rRNA + S-adenosyl-L-homocysteine + H(+). Its function is as follows. Specifically methylates the pseudouridine at position 1915 (m3Psi1915) in 23S rRNA. In Thermotoga maritima (strain ATCC 43589 / DSM 3109 / JCM 10099 / NBRC 100826 / MSB8), this protein is Ribosomal RNA large subunit methyltransferase H.